A 447-amino-acid chain; its full sequence is N-succinylarginine dihydrolase (447 aa).

Residues 19 to 28, Asn110, and 137 to 138 each bind substrate; these read AGLSFGNEAS and HR. The active site involves Glu174. Arg212 is a binding site for substrate. His248 is an active-site residue. Residues Asp250 and Asn359 each contribute to the substrate site. Cys365 acts as the Nucleophile in catalysis.

The protein belongs to the succinylarginine dihydrolase family. Homodimer.

It carries out the reaction N(2)-succinyl-L-arginine + 2 H2O + 2 H(+) = N(2)-succinyl-L-ornithine + 2 NH4(+) + CO2. The protein operates within amino-acid degradation; L-arginine degradation via AST pathway; L-glutamate and succinate from L-arginine: step 2/5. Its function is as follows. Catalyzes the hydrolysis of N(2)-succinylarginine into N(2)-succinylornithine, ammonia and CO(2). This chain is N-succinylarginine dihydrolase, found in Escherichia coli O139:H28 (strain E24377A / ETEC).